We begin with the raw amino-acid sequence, 697 residues long: Elongation factor G 2 (697 aa).

The region spanning S5–D280 is the tr-type G domain. GTP is bound by residues A14 to T21, D78 to H82, and N132 to D135.

This sequence belongs to the TRAFAC class translation factor GTPase superfamily. Classic translation factor GTPase family. EF-G/EF-2 subfamily.

The protein resides in the cytoplasm. In terms of biological role, catalyzes the GTP-dependent ribosomal translocation step during translation elongation. During this step, the ribosome changes from the pre-translocational (PRE) to the post-translocational (POST) state as the newly formed A-site-bound peptidyl-tRNA and P-site-bound deacylated tRNA move to the P and E sites, respectively. Catalyzes the coordinated movement of the two tRNA molecules, the mRNA and conformational changes in the ribosome. The sequence is that of Elongation factor G 2 (fusB) from Shewanella oneidensis (strain ATCC 700550 / JCM 31522 / CIP 106686 / LMG 19005 / NCIMB 14063 / MR-1).